We begin with the raw amino-acid sequence, 645 residues long: Rab11 family-interacting protein 5 (645 aa).

Positions 1–146 constitute a C2 domain; the sequence is MALVRDPEPA…AGRAQHTQWY (146 aa). Phosphoserine is present on residues S176, S283, S286, S307, S357, and S367. The interval 271 to 299 is disordered; the sequence is GAELLTRSPSHSSWLSTEGGRDSIQSPKL. Residues 277–286 are compositionally biased toward polar residues; that stretch reads RSPSHSSWLS. The interval 341-550 is disordered; sequence SHVYNEEPQP…STALSSGLER (210 aa). Low complexity predominate over residues 357-374; that stretch reads SISGPFPPSSSLHSVPPR. Residues 375-387 are compositionally biased toward basic and acidic residues; that stretch reads SSEEGSRSSDDSW. S391 and S395 each carry phosphoserine. The span at 452–463 shows a compositional bias: basic residues; that stretch reads RMGLFHHHHHQG. A phosphoserine mark is found at S486, S530, S539, S545, and S640. The region spanning 578 to 640 is the FIP-RBD domain; that stretch reads KDSAVLDQSA…ETSPTLLQIS (63 aa).

In terms of assembly, interacts with RAB11FIP4. Interacts with NAPG. Interacts with RO60. Interacts with RAB11A that has been activated by GTP binding. Phosphorylated on serine and threonine residues. Phosphorylation at Ser-357 is PKA-dependent.

The protein resides in the cytoplasm. It localises to the recycling endosome membrane. Its subcellular location is the early endosome membrane. The protein localises to the golgi apparatus membrane. It is found in the cytoplasmic vesicle. The protein resides in the secretory vesicle membrane. It localises to the mitochondrion membrane. Rab effector involved in protein trafficking from apical recycling endosomes to the apical plasma membrane. Involved in insulin granule exocytosis. May regulate V-ATPase intracellular transport in response to extracellular acidosis. The sequence is that of Rab11 family-interacting protein 5 from Mus musculus (Mouse).